Reading from the N-terminus, the 292-residue chain is NAD kinase (292 aa).

The active-site Proton acceptor is aspartate 73. NAD(+) contacts are provided by residues 73–74, 147–148, histidine 158, arginine 175, aspartate 177, 188–193, and glutamine 247; these read DG, NE, and TAYSLS.

The protein belongs to the NAD kinase family. The cofactor is a divalent metal cation.

The protein localises to the cytoplasm. It carries out the reaction NAD(+) + ATP = ADP + NADP(+) + H(+). Involved in the regulation of the intracellular balance of NAD and NADP, and is a key enzyme in the biosynthesis of NADP. Catalyzes specifically the phosphorylation on 2'-hydroxyl of the adenosine moiety of NAD to yield NADP. The protein is NAD kinase of Shigella boydii serotype 4 (strain Sb227).